We begin with the raw amino-acid sequence, 774 residues long: Subtilisin-like protease SBT3.5 (774 aa).

Residues 1 to 23 (MRNCRVLLVLVLSLVIVLNVVRA) form the signal peptide. Residues 24-108 (SDESKVHIVY…VMADSFYELA (85 aa)) constitute a propeptide, removed in mature form. One can recognise an Inhibitor I9 domain in the interval 29–108 (VHIVYLGEKQ…VMADSFYELA (80 aa)). The 510-residue stretch at 112–621 (TWDYLGLSVA…GGIVNPEKAA (510 aa)) folds into the Peptidase S8 domain. The N-linked (GlcNAc...) asparagine glycan is linked to Asn128. Catalysis depends on Asp142, which acts as the Charge relay system. Asn201 carries an N-linked (GlcNAc...) asparagine glycan. The Charge relay system role is filled by His217. N-linked (GlcNAc...) asparagine glycans are attached at residues Asn232, Asn394, Asn409, and Asn539. The 96-residue stretch at 383 to 478 (SLVYPENAGF…ELGTDVLLYI (96 aa)) folds into the PA domain. The active-site Charge relay system is Ser552. N-linked (GlcNAc...) asparagine glycans are attached at residues Asn644, Asn654, Asn725, and Asn755.

This sequence belongs to the peptidase S8 family. As to expression, expressed in roots, leaves, stems, flower buds, developing siliques and mature seeds.

It is found in the secreted. Its subcellular location is the cell wall. In terms of biological role, serine protease that cleaves the pectin methylesterase 17 (PME17) protein to release the PME17 mature form in the apoplasm. This Arabidopsis thaliana (Mouse-ear cress) protein is Subtilisin-like protease SBT3.5.